The primary structure comprises 588 residues: MTTTGSLPAQPSSTSPRTGNPSTDRALAMLLALVREGVTDVVLCPGSRSQALALVAAELERVDGVRLHVRIDERAAGFLALGLGVESGRPAPVITTSGTAVANLHPAVLEGWHSGVPMLLLTGDRPAELRGIASNQTTRQPGMFGDRVVVVDVPAPEETDEDLSRDARLARDAYRRARDERTPVHVNVAFRDPLSVAVPDLAEAVAEAHAAADAEAAAAPAPAGPTAADVLDLPHGPRTLVVAGHAAGEAAEELARAGGWPLAAEISSGSHFGPNLVVSFRELLARPGFGDRVERVIVFGHPTLTREVPLLVGREDVEAIVVGSTGGEDYDPRHRVTAHPAAVRVVGEPADPAEARRWTGTWVQASRAILDEASAAESAPLLPSGTTPAERRDFARAELAAVRADVTRRHLVRALWQATWPHDRLVLGASRLIREADRALPGKRVRVHANRGLAGIDGTISTGLGIALASQAGSGSAAAGITRVLVGDLTLLHDVGSLLIGTGERVPRIQVIVGNDGGGTIFDGLEVANTAAPAAIDRVMFTPQRVDLASLAKAYGWTHLRAATHGELEAALTTASGAPLLIEVPLVR.

The segment at 1–22 (MTTTGSLPAQPSSTSPRTGNPS) is disordered.

This sequence belongs to the TPP enzyme family. MenD subfamily. In terms of assembly, homodimer. Requires Mg(2+) as cofactor. The cofactor is Mn(2+). Thiamine diphosphate is required as a cofactor.

It catalyses the reaction isochorismate + 2-oxoglutarate + H(+) = 5-enolpyruvoyl-6-hydroxy-2-succinyl-cyclohex-3-ene-1-carboxylate + CO2. Its pathway is quinol/quinone metabolism; 1,4-dihydroxy-2-naphthoate biosynthesis; 1,4-dihydroxy-2-naphthoate from chorismate: step 2/7. It functions in the pathway quinol/quinone metabolism; menaquinone biosynthesis. In terms of biological role, catalyzes the thiamine diphosphate-dependent decarboxylation of 2-oxoglutarate and the subsequent addition of the resulting succinic semialdehyde-thiamine pyrophosphate anion to isochorismate to yield 2-succinyl-5-enolpyruvyl-6-hydroxy-3-cyclohexene-1-carboxylate (SEPHCHC). The polypeptide is 2-succinyl-5-enolpyruvyl-6-hydroxy-3-cyclohexene-1-carboxylate synthase (Clavibacter michiganensis subsp. michiganensis (strain NCPPB 382)).